A 710-amino-acid polypeptide reads, in one-letter code: Amyloid beta precursor protein binding family B member 1 (710 aa).

Residues 1–15 (MSVPSSLSQSAINAN) are compositionally biased toward polar residues. 4 disordered regions span residues 1–24 (MSVPSSLSQSAINANSHGGPALSL), 131–254 (GLRG…TDSD), 276–299 (GTTQWEPPGRASPSQGSSPQEESQ), and 340–365 (TFPAQSLSPEPLPQEEEKLPPRNTNP). Residues 145–173 (GPDEGEEKAAGEAEEEEEDDDDEEEEEDL) show a composition bias toward acidic residues. An N6-acetyllysine modification is found at K204. Polar residues predominate over residues 223–234 (SWATLSQGSPSY). Positions 253–285 (SDLPAGWMRVQDTSGTYYWHIPTGTTQWEPPGR) constitute a WW domain. Residues 287 to 299 (SPSQGSSPQEESQ) show a composition bias toward low complexity. One can recognise a PID 1 domain in the interval 370–509 (FAVRSLGWVE…SKIMAERRNA (140 aa)). S459 is subject to Phosphoserine; by PKC. A Phosphoserine modification is found at S517. Residues 542-699 (KFQVYYLGNV…RRGVQSLWGS (158 aa)) form the PID 2 domain. Y547 carries the phosphotyrosine; by ABL1 modification. S610 carries the post-translational modification Phosphoserine; by SGK1. K701 is subject to N6-acetyllysine.

As to quaternary structure, component of a complex, at least composed of APBB1, RASD1/DEXRAS1 and APP. Interacts (via PID domain 2) with APP (with the intracellular domain of the amyloid-beta precursor protein). Interacts (via PID domain 2) with RASD1/DEXRAS1; impairs the transcription activation activity. Interacts (via PID domain 1) with KAT5/TIP60. Interacts (via the WW domain) with the proline-rich region of APBB1IP. Interacts with TSHZ1 and TSHZ2. Interacts (via the WW domain) with histone H2AX (when phosphorylated on 'Tyr-142') and the proline-rich region of ENAH. Interacts with MAPK8. Interacts (via PID domain 1) with TSHZ3 (via homeobox domain). Interacts with SET. Found in a trimeric complex with HDAC1 and TSHZ3; the interaction between HDAC1 and APBB1 is mediated by TSHZ3. Interacts (via WWW domain) with NEK6. Interacts (via WWW domain) with ABL1. Interacts with RNF157. Interacts with ARF6. Post-translationally, phosphorylation at Ser-610 by SGK1 promotes its localization to the nucleus. Phosphorylated following nuclear translocation. Phosphorylation at Tyr-547 by ABL1 enhances transcriptional activation activity and reduces the affinity for RASD1/DEXRAS1. Phosphorylated at Ser-459 by PKC upon insulin activation. In terms of processing, acetylation at Lys-204 and Lys-701 by KAT5 promotes its transcription activator activity. Polyubiquitination by RNF157 leads to degradation by the proteasome. As to expression, highly expressed in brain; strongly reduced in post-mortem elderly subjects with Alzheimer disease. Expressed preferentially in the brain.

It is found in the cell membrane. The protein resides in the cytoplasm. Its subcellular location is the nucleus. The protein localises to the cell projection. It localises to the growth cone. It is found in the nucleus speckle. Functionally, transcription coregulator that can have both coactivator and corepressor functions. Adapter protein that forms a transcriptionally active complex with the gamma-secretase-derived amyloid precursor protein (APP) intracellular domain. Plays a central role in the response to DNA damage by translocating to the nucleus and inducing apoptosis. May act by specifically recognizing and binding histone H2AX phosphorylated on 'Tyr-142' (H2AXY142ph) at double-strand breaks (DSBs), recruiting other pro-apoptosis factors such as MAPK8/JNK1. Required for histone H4 acetylation at double-strand breaks (DSBs). Its ability to specifically bind modified histones and chromatin modifying enzymes such as KAT5/TIP60, probably explains its transcription activation activity. Functions in association with TSHZ3, SET and HDAC factors as a transcriptional repressor, that inhibits the expression of CASP4. Associates with chromatin in a region surrounding the CASP4 transcriptional start site(s). Involved in hippocampal neurite branching and neuromuscular junction formation, as a result plays a role in spatial memory functioning. Plays a role in the maintenance of lens transparency. May play a role in muscle cell strength. Acts as a molecular adapter that functions in neurite outgrowth by activating the RAC1-ARF6 axis upon insulin treatment. The polypeptide is Amyloid beta precursor protein binding family B member 1 (Homo sapiens (Human)).